The primary structure comprises 100 residues: MKPEKKRILTTGEIDNSCFNKKSGGARTTVNGSPTDEKAFKVVSTLAGCQRLLRISHILLRHVEVDTRTYFLFSTLVAAGGRTLPSGGRGQGSKLTGEAI.

This is an uncharacterized protein from Lactuca sativa (Garden lettuce).